Here is a 370-residue protein sequence, read N- to C-terminus: Anhydro-N-acetylmuramic acid kinase (370 aa).

13–20 (GTSMDGVD) contributes to the ATP binding site.

It belongs to the anhydro-N-acetylmuramic acid kinase family.

The catalysed reaction is 1,6-anhydro-N-acetyl-beta-muramate + ATP + H2O = N-acetyl-D-muramate 6-phosphate + ADP + H(+). Its pathway is amino-sugar metabolism; 1,6-anhydro-N-acetylmuramate degradation. It participates in cell wall biogenesis; peptidoglycan recycling. In terms of biological role, catalyzes the specific phosphorylation of 1,6-anhydro-N-acetylmuramic acid (anhMurNAc) with the simultaneous cleavage of the 1,6-anhydro ring, generating MurNAc-6-P. Is required for the utilization of anhMurNAc either imported from the medium or derived from its own cell wall murein, and thus plays a role in cell wall recycling. In Shewanella frigidimarina (strain NCIMB 400), this protein is Anhydro-N-acetylmuramic acid kinase.